A 1733-amino-acid chain; its full sequence is Protein NETWORKED 1D (1733 aa).

The NAB domain occupies 12-92 (YSWWWDSHIS…ERYDHATGVI (81 aa)). 4 coiled-coil regions span residues 195-816 (KEIN…RESS), 897-931 (LIAE…QIDS), 960-1043 (DENS…QKLI), and 1196-1386 (ARSA…NDLM). Positions 1456–1476 (LKTSSARRSRRRNGSLRKQNH) are disordered. Over residues 1460-1470 (SARRSRRRNGS) the composition is skewed to basic residues. 2 coiled-coil regions span residues 1553–1627 (ANKR…KVQN) and 1653–1686 (SEQA…DRED). Residues 1628–1656 (GFERSDGSKSSMDLDENESSRRRRISEQA) form a disordered region.

This sequence belongs to the NET family.

Functionally, plant-specific actin binding protein. May be part of a membrane-cytoskeletal adapter complex. This is Protein NETWORKED 1D from Arabidopsis thaliana (Mouse-ear cress).